A 1488-amino-acid chain; its full sequence is Chromosome partition protein MukB (1488 aa).

Gly34–Ser41 is a binding site for ATP. Coiled-coil stretches lie at residues Leu326 to Gln418, Leu444 to His472, and Arg509 to Pro602. A flexible hinge region spans residues Pro666–Arg783. 3 coiled-coil regions span residues Glu835–Glu923, Glu977–Gly1116, and Val1209–Val1265. A disordered region spans residues Ala1049 to Arg1074. Basic and acidic residues predominate over residues Ser1051 to His1065.

Belongs to the SMC family. MukB subfamily. Homodimerization via its hinge domain. Binds to DNA via its C-terminal region. Interacts, and probably forms a ternary complex, with MukE and MukF via its C-terminal region. The complex formation is stimulated by calcium or magnesium. Interacts with tubulin-related protein FtsZ.

The protein resides in the cytoplasm. Its subcellular location is the nucleoid. In terms of biological role, plays a central role in chromosome condensation, segregation and cell cycle progression. Functions as a homodimer, which is essential for chromosome partition. Involved in negative DNA supercoiling in vivo, and by this means organize and compact chromosomes. May achieve or facilitate chromosome segregation by condensation DNA from both sides of a centrally located replisome during cell division. The protein is Chromosome partition protein MukB of Salmonella typhimurium (strain LT2 / SGSC1412 / ATCC 700720).